We begin with the raw amino-acid sequence, 430 residues long: uncharacterized protein (430 aa).

This is an uncharacterized protein from Escherichia coli (strain K12).